The following is a 316-amino-acid chain: tRNA pseudouridine synthase B (316 aa).

Aspartate 47 (nucleophile) is an active-site residue.

The protein belongs to the pseudouridine synthase TruB family. Type 1 subfamily.

It carries out the reaction uridine(55) in tRNA = pseudouridine(55) in tRNA. Its function is as follows. Responsible for synthesis of pseudouridine from uracil-55 in the psi GC loop of transfer RNAs. The polypeptide is tRNA pseudouridine synthase B (Aliivibrio fischeri (strain MJ11) (Vibrio fischeri)).